The following is a 146-amino-acid chain: Probable trivalent organoarsenical cleaving enzyme (146 aa).

Residues 2-118 enclose the VOC domain; it reads KYVHVGVNVV…DGNEWEFFYT (117 aa). His5 and His62 together coordinate Fe(2+). Residues Cys95 and Cys96 each coordinate roxarsone (III). Glu114 lines the Fe(2+) pocket.

To M.tuberculosis Rv2641. Requires Fe(2+) as cofactor.

It carries out the reaction methylarsonous acid + AH2 + O2 = arsenite + methanol + A + H(+). The enzyme catalyses roxarsone (III) + AH2 + O2 = 4-hydroxy-3-nitrocyclohexa-2,5-dien-1-one + arsenite + A + H(+). It catalyses the reaction nitarsone (III) + AH2 + O2 = 4-nitrocyclohexa-2,5-dien-1-one + arsenite + A + H(+). The catalysed reaction is 4-aminophenylarsonous acid + AH2 + O2 = 4-aminocyclohexa-2,5-dien-1-one + arsenite + A. Its function is as follows. Nonheme iron-dependent dioxygenase that can break carbon-arsenic bonds, playing a role in the detoxification of environmental organoarsenical compounds. Catalyzes the oxygen-dependent demethylation of highly toxic methylarsonous acid (MAs(III)) to arsenite, which can then be exported out of the cell. Can also cleave the C-As bond in several trivalent aromatic arsenicals, including roxarsone (III), nitarsone (III) and (4-aminophenyl)arsonous acid. Organoarsenical degradation by this enzyme is proposed to have a significant impact on the arsenic biogeocycle that maintains a balance between organic and inorganic species. The polypeptide is Probable trivalent organoarsenical cleaving enzyme (yqcK) (Bacillus subtilis (strain 168)).